A 1142-amino-acid polypeptide reads, in one-letter code: DNA-directed RNA polymerase subunit beta N-terminal section (1142 aa).

Belongs to the RNA polymerase beta chain family. In terms of assembly, in plastids the minimal PEP RNA polymerase catalytic core is composed of four subunits: alpha, beta, beta', and beta''. When a (nuclear-encoded) sigma factor is associated with the core the holoenzyme is formed, which can initiate transcription.

It localises to the plastid. The protein resides in the chloroplast. The catalysed reaction is RNA(n) + a ribonucleoside 5'-triphosphate = RNA(n+1) + diphosphate. Functionally, DNA-dependent RNA polymerase catalyzes the transcription of DNA into RNA using the four ribonucleoside triphosphates as substrates. The sequence is that of DNA-directed RNA polymerase subunit beta N-terminal section (rpoB1) from Pleurastrum terricola (Filamentous green alga).